The chain runs to 151 residues: UPF0178 protein YaiI (151 aa).

The protein belongs to the UPF0178 family.

The protein is UPF0178 protein YaiI of Salmonella agona (strain SL483).